We begin with the raw amino-acid sequence, 240 residues long: Probable septum site-determining protein MinC (240 aa).

Belongs to the MinC family. As to quaternary structure, interacts with MinD and FtsZ.

In terms of biological role, cell division inhibitor that blocks the formation of polar Z ring septums. Rapidly oscillates between the poles of the cell to destabilize FtsZ filaments that have formed before they mature into polar Z rings. Prevents FtsZ polymerization. This is Probable septum site-determining protein MinC from Aeromonas hydrophila subsp. hydrophila (strain ATCC 7966 / DSM 30187 / BCRC 13018 / CCUG 14551 / JCM 1027 / KCTC 2358 / NCIMB 9240 / NCTC 8049).